The chain runs to 340 residues: Ketol-acid reductoisomerase (NADP(+)) (340 aa).

The 183-residue stretch at 1 to 183 (MAITVYYDKD…GGGRTGIIET (183 aa)) folds into the KARI N-terminal Rossmann domain. Residues 26-29 (FGSQ), arginine 49, serine 52, serine 54, and 84-87 (DEIQ) each bind NADP(+). Residue histidine 109 is part of the active site. NADP(+) is bound at residue glycine 135. One can recognise a KARI C-terminal knotted domain in the interval 184-329 (TFKAETETDL…RNLRAMMPWI (146 aa)). Mg(2+) is bound by residues aspartate 192, glutamate 196, glutamate 228, and glutamate 232. Residue serine 253 participates in substrate binding.

This sequence belongs to the ketol-acid reductoisomerase family. Mg(2+) is required as a cofactor.

It carries out the reaction (2R)-2,3-dihydroxy-3-methylbutanoate + NADP(+) = (2S)-2-acetolactate + NADPH + H(+). The catalysed reaction is (2R,3R)-2,3-dihydroxy-3-methylpentanoate + NADP(+) = (S)-2-ethyl-2-hydroxy-3-oxobutanoate + NADPH + H(+). The protein operates within amino-acid biosynthesis; L-isoleucine biosynthesis; L-isoleucine from 2-oxobutanoate: step 2/4. It functions in the pathway amino-acid biosynthesis; L-valine biosynthesis; L-valine from pyruvate: step 2/4. In terms of biological role, involved in the biosynthesis of branched-chain amino acids (BCAA). Catalyzes an alkyl-migration followed by a ketol-acid reduction of (S)-2-acetolactate (S2AL) to yield (R)-2,3-dihydroxy-isovalerate. In the isomerase reaction, S2AL is rearranged via a Mg-dependent methyl migration to produce 3-hydroxy-3-methyl-2-ketobutyrate (HMKB). In the reductase reaction, this 2-ketoacid undergoes a metal-dependent reduction by NADPH to yield (R)-2,3-dihydroxy-isovalerate. This chain is Ketol-acid reductoisomerase (NADP(+)), found in Campylobacter jejuni subsp. doylei (strain ATCC BAA-1458 / RM4099 / 269.97).